We begin with the raw amino-acid sequence, 538 residues long: Putative outer membrane porin BglH (538 aa).

Positions 1 to 25 (MFRQNLITSAILLMAPLAFSAQSLA) are cleaved as a signal peptide. The disordered stretch occupies residues 52 to 82 (KDEEKKKYTPATVNRSVSTNDQGYAANPFPT). Positions 62-73 (ATVNRSVSTNDQ) are enriched in polar residues.

Belongs to the porin LamB (TC 1.B.3) family.

It localises to the cell outer membrane. Its function is as follows. May be a sugar porin with a broad carbohydrate specificity. The protein is Putative outer membrane porin BglH (bglH) of Shigella flexneri.